A 196-amino-acid chain; its full sequence is Endoribonuclease YbeY (196 aa).

Positions 120, 124, and 130 each coordinate Zn(2+).

This sequence belongs to the endoribonuclease YbeY family. Requires Zn(2+) as cofactor.

It is found in the cytoplasm. Its function is as follows. Single strand-specific metallo-endoribonuclease involved in late-stage 70S ribosome quality control and in maturation of the 3' terminus of the 16S rRNA. The polypeptide is Endoribonuclease YbeY (Corynebacterium glutamicum (strain ATCC 13032 / DSM 20300 / JCM 1318 / BCRC 11384 / CCUG 27702 / LMG 3730 / NBRC 12168 / NCIMB 10025 / NRRL B-2784 / 534)).